The primary structure comprises 431 residues: 5-methylthioadenosine/S-adenosylhomocysteine deaminase (431 aa).

The Zn(2+) site is built by His-66 and His-68. Residues Glu-95, Arg-147, and His-185 each coordinate substrate. His-212 lines the Zn(2+) pocket. Substrate contacts are provided by Glu-215 and Asp-300. Asp-300 lines the Zn(2+) pocket.

It belongs to the metallo-dependent hydrolases superfamily. MTA/SAH deaminase family. Requires Zn(2+) as cofactor.

It carries out the reaction S-adenosyl-L-homocysteine + H2O + H(+) = S-inosyl-L-homocysteine + NH4(+). The catalysed reaction is S-methyl-5'-thioadenosine + H2O + H(+) = S-methyl-5'-thioinosine + NH4(+). Functionally, catalyzes the deamination of 5-methylthioadenosine and S-adenosyl-L-homocysteine into 5-methylthioinosine and S-inosyl-L-homocysteine, respectively. Is also able to deaminate adenosine. In Desulfitobacterium hafniense (strain Y51), this protein is 5-methylthioadenosine/S-adenosylhomocysteine deaminase.